The chain runs to 263 residues: Ubiquitin domain-containing protein 7SL RNA2 (263 aa).

One can recognise a Ubiquitin-like 1 domain in the interval 1–53; sequence MNVDIDTETGSSFSITIDFGETVLQIKEKIEKSQGIPVSKQILYLDGKALEDD. A disordered region spans residues 74 to 93; the sequence is ADPNQSNEQTEQSKQIDDKK. The span at 76–86 shows a compositional bias: polar residues; that stretch reads PNQSNEQTEQS. Positions 184 to 263 constitute a Ubiquitin-like 2 domain; the sequence is FTVHVKPYQE…GDTIELIREK (80 aa).

It belongs to the ubiquitin family. As to expression, expressed in seedlings, roots, stems, rosettes and flowers (at protein level).

It is found in the nucleus. Controls phase transition from the vegetative to the reproductive state. Involved in the maintenance of the shoot apical meristem (SAM) thus preventing inflorescence meristem (IM) formation and subsequent inflorescence stem development during flowering. Regulates leaf and organ morphology. The sequence is that of Ubiquitin domain-containing protein 7SL RNA2 from Arabidopsis thaliana (Mouse-ear cress).